The primary structure comprises 177 residues: Large ribosomal subunit protein uL6 (177 aa).

It belongs to the universal ribosomal protein uL6 family. As to quaternary structure, part of the 50S ribosomal subunit.

Its function is as follows. This protein binds to the 23S rRNA, and is important in its secondary structure. It is located near the subunit interface in the base of the L7/L12 stalk, and near the tRNA binding site of the peptidyltransferase center. The chain is Large ribosomal subunit protein uL6 from Pseudomonas syringae pv. syringae (strain B728a).